The sequence spans 133 residues: MNYDNYWDEDKPELNITPLVDVMLVLLAILMVTTPTLTYKEEIALPSGSKTARATQDKMIEIRMDKDAKIYIDSQTYEYNSFPDTFNLLSKKYDKDTRVSIRADKRLTYDKVIYLLKTIKEAGFLKVSLITSP.

Over 1-15 the chain is Cytoplasmic; it reads MNYDNYWDEDKPELN. The helical transmembrane segment at 16–32 threads the bilayer; it reads ITPLVDVMLVLLAILMV. The Periplasmic portion of the chain corresponds to 33–133; it reads TTPTLTYKEE…FLKVSLITSP (101 aa).

This sequence belongs to the ExbD/TolR family.

The protein resides in the cell inner membrane. The sequence is that of Putative biopolymer transport protein ExbD-like 1 from Helicobacter pylori (strain ATCC 700392 / 26695) (Campylobacter pylori).